We begin with the raw amino-acid sequence, 181 residues long: Organ-specific protein S2 (181 aa).

Repeat copies occupy residues 59–84, 85–110, 111–136, and 137–162. The segment at 59-162 is 4 X 26 AA tandem repeats; sequence HAKENMGAIG…NASAYGDNEI (104 aa). The disordered stretch occupies residues 94-181; sequence GEFEPRPNAS…PRPSMTKYNA (88 aa).

To organ specific protein P4. In terms of tissue distribution, expressed in stems.

This is Organ-specific protein S2 from Pisum sativum (Garden pea).